Consider the following 133-residue polypeptide: NADPH-dependent 7-cyano-7-deazaguanine reductase (133 aa).

The active-site Thioimide intermediate is the Cys49. The active-site Proton donor is Asp56. Substrate is bound by residues 71–73 (IEL) and 90–91 (HE).

Belongs to the GTP cyclohydrolase I family. QueF type 1 subfamily.

Its subcellular location is the cytoplasm. It carries out the reaction 7-aminomethyl-7-carbaguanine + 2 NADP(+) = 7-cyano-7-deazaguanine + 2 NADPH + 3 H(+). It participates in tRNA modification; tRNA-queuosine biosynthesis. Functionally, catalyzes the NADPH-dependent reduction of 7-cyano-7-deazaguanine (preQ0) to 7-aminomethyl-7-deazaguanine (preQ1). The chain is NADPH-dependent 7-cyano-7-deazaguanine reductase from Leptospira interrogans serogroup Icterohaemorrhagiae serovar copenhageni (strain Fiocruz L1-130).